The following is a 548-amino-acid chain: MISKINGKLFADMIIQGAQNLSNNADLVDSLNVYPVPDGDTGTNMNLTMTSGREEVENNLSKNIGELGKTFSKGLLMGARGNSGVILSQLFRGFCKNIESESEINSKLLAESFQAGVETAYKAVMKPVEGTILTVAKDAAQAAVEKANNTEDCIELMEYIIVKANESLENTPNLLAVLKEVGVVDSGGKGLLCVYEGFLKALKGEKVEAKVAKLDKDEFVHDEHDFHGVINTEDIIYGYCTEMMVRFGKNKKAFDEQEFRQDMSQFGDSLLVINDEEIVKVHVHTEYPGKVFNYGQQYGELIKLKVENMREQHREVIRKEQHTAKPKMETVETAIITISMGEGISEIFKSMGATHIISGGQTMNPSTEDIVKVIEQSKCKRAIILPNNKNILMASEQAASIVDAEAVVIPTKSIPQGISALFQYDVDATLEENKAQMADSVNNVKSGSLTYAVRDTKIDGVEIKKDAFMGLIEDKIVSSKSDQLTTVTELLNEMLAEDSEILTVIIGQDAEQAVTDNMINWIEEQNPDVEVEVHEGGQPIYQYFFSVE.

The 193-residue stretch at 8–200 (KLFADMIIQG…LLCVYEGFLK (193 aa)) folds into the DhaL domain.

This is an uncharacterized protein from Staphylococcus aureus (strain bovine RF122 / ET3-1).